A 168-amino-acid chain; its full sequence is Ribosome maturation factor RimM (168 aa).

One can recognise a PRC barrel domain in the interval 95–168; it reads EEGYYWSDLI…RITVDWGLDY (74 aa).

The protein belongs to the RimM family. In terms of assembly, binds ribosomal protein uS19.

It is found in the cytoplasm. Its function is as follows. An accessory protein needed during the final step in the assembly of 30S ribosomal subunit, possibly for assembly of the head region. Essential for efficient processing of 16S rRNA. May be needed both before and after RbfA during the maturation of 16S rRNA. It has affinity for free ribosomal 30S subunits but not for 70S ribosomes. This Nitrosospira multiformis (strain ATCC 25196 / NCIMB 11849 / C 71) protein is Ribosome maturation factor RimM.